Reading from the N-terminus, the 463-residue chain is Glucagon-like peptide 1 receptor (463 aa).

Positions 1–21 (MASTPSLLRLALLLLGAVGRA) are cleaved as a signal peptide. At 22 to 139 (GPRPQGTTVS…KRGERNFPEE (118 aa)) the chain is on the extracellular side. 3 disulfide bridges follow: cysteine 46–cysteine 71, cysteine 62–cysteine 104, and cysteine 85–cysteine 126. N-linked (GlcNAc...) asparagine glycosylation is found at asparagine 63, asparagine 82, and asparagine 115. The chain crosses the membrane as a helical span at residues 140-164 (QLLSLYIIYTVGYALSFSALVIASA). At 165–175 (ILVGFRHLHCT) the chain is on the cytoplasmic side. Residues 176–201 (RNYIHLNLFASFILRALSVFIKDAAL) traverse the membrane as a helical segment. The Extracellular portion of the chain corresponds to 202-227 (KWMYSTAAQQHQWDGLLSYQDSLGCR). Residues cysteine 226 and cysteine 296 are joined by a disulfide bond. A helical membrane pass occupies residues 228 to 251 (LVFLLMQYCVAANYYWLLVEGVYL). Over 252–265 (YTLLAFSVFSEQRI) the chain is Cytoplasmic. A helical membrane pass occupies residues 266–290 (FKLYLSIGWGVPLLFVIPWGIVKYL). Residues 291–305 (YEDEGCWTRNSNMNY) are Extracellular-facing. A helical transmembrane segment spans residues 306–328 (WLIIRLPILFAIGVNFLIFIRVI). Over 329–348 (CIVVSKLKANLMCKTDIKCR) the chain is Cytoplasmic. Cysteine 341 is modified (ADP-ribosylcysteine). ADP-ribosylarginine is present on arginine 348. The chain crosses the membrane as a helical span at residues 349–370 (LAKSTLTLIPLLGTHEVIFAFV). The important for allosteric inhibitor binding stretch occupies residues 352-355 (STLT). At 371 to 383 (MDEHARGTLRFIK) the chain is on the extracellular side. A helical transmembrane segment spans residues 384–404 (LFTELSFTSFQGLMVAILYCF). Topologically, residues 405–463 (VNNEVQMEFRKCWERWRLEHLNIQRDCSMKPLKCPTSSVSSGATVGSSVYAATCQSSYS) are cytoplasmic.

This sequence belongs to the G-protein coupled receptor 2 family. In terms of assembly, may form homodimers and heterodimers with GIPR. Post-translationally, N-glycosylation enhances cell surface expression and lengthens receptor half-life by preventing degradation in the ER. In terms of tissue distribution, detected in pancreatic islets (at protein level). Detected in pancreatic islets and lungs.

Its subcellular location is the cell membrane. G-protein coupled receptor for glucagon-like peptide 1 (GLP-1). Ligand binding triggers activation of a signaling cascade that leads to the activation of adenylyl cyclase and increased intracellular cAMP levels. Plays a role in regulating insulin secretion in response to GLP-1. This is Glucagon-like peptide 1 receptor (Glp1r) from Mus musculus (Mouse).